Reading from the N-terminus, the 388-residue chain is Succinate--CoA ligase [ADP-forming] subunit beta (388 aa).

One can recognise an ATP-grasp domain in the interval 9 to 245 (KELLKSYGLP…KSQENERELK (237 aa)). ATP is bound by residues K46, 53 to 55 (GRG), E100, Y103, and E108. 2 residues coordinate Mg(2+): N200 and D214. Residues N265 and 322 to 324 (GIV) each bind substrate.

The protein belongs to the succinate/malate CoA ligase beta subunit family. Heterotetramer of two alpha and two beta subunits. Mg(2+) serves as cofactor.

The enzyme catalyses succinate + ATP + CoA = succinyl-CoA + ADP + phosphate. It catalyses the reaction GTP + succinate + CoA = succinyl-CoA + GDP + phosphate. Its pathway is carbohydrate metabolism; tricarboxylic acid cycle; succinate from succinyl-CoA (ligase route): step 1/1. Functionally, succinyl-CoA synthetase functions in the citric acid cycle (TCA), coupling the hydrolysis of succinyl-CoA to the synthesis of either ATP or GTP and thus represents the only step of substrate-level phosphorylation in the TCA. The beta subunit provides nucleotide specificity of the enzyme and binds the substrate succinate, while the binding sites for coenzyme A and phosphate are found in the alpha subunit. This Psychrobacter cryohalolentis (strain ATCC BAA-1226 / DSM 17306 / VKM B-2378 / K5) protein is Succinate--CoA ligase [ADP-forming] subunit beta.